The following is a 596-amino-acid chain: Probable lysosomal cobalamin transporter (596 aa).

The next 10 membrane-spanning stretches (helical) occupy residues 7 to 27, 46 to 66, 95 to 115, 145 to 165, 196 to 216, 313 to 333, 350 to 370, 376 to 396, 420 to 440, and 507 to 527; these read AFIWVAYAVAVGIVALIAAIF, IITLTSLLATVLLLPVDIALV, IVYYALYSLDAVLCLLVIPFT, TLFFVVLVVILFLVGFFAPVA, LLISLGTLLYILYTSVGLALL, LVGGILLLLLSVIIWASMLIT, ILGSINIFQPLNWVFVKSSIV, VLMALLVLFLFSSSVTGIAVI, MATVMLTLIILAINYSIAMII, and FFGALAFWAQFVFLAIFLIVF. Positions 566–596 are disordered; that stretch reads WQDIRGKAKNQTPSRGAAGRGIRGDDDHDDD. Basic and acidic residues predominate over residues 587–596; it reads IRGDDDHDDD.

This sequence belongs to the LIMR family. LMBRD1 subfamily.

The protein localises to the lysosome membrane. Functionally, probable lysosomal cobalamin transporter. Required to export cobalamin from lysosomes allowing its conversion to cofactors. The polypeptide is Probable lysosomal cobalamin transporter (Sclerotinia sclerotiorum (strain ATCC 18683 / 1980 / Ss-1) (White mold)).